Consider the following 363-residue polypeptide: Peptide chain release factor 1 (363 aa).

Q237 is modified (N5-methylglutamine). Basic and acidic residues predominate over residues 284–296; that stretch reads EDEKRRSAEESTR. Positions 284 to 305 are disordered; that stretch reads EDEKRRSAEESTRRSLVASGDR.

Belongs to the prokaryotic/mitochondrial release factor family. Methylated by PrmC. Methylation increases the termination efficiency of RF1.

Its subcellular location is the cytoplasm. In terms of biological role, peptide chain release factor 1 directs the termination of translation in response to the peptide chain termination codons UAG and UAA. This chain is Peptide chain release factor 1, found in Shewanella sp. (strain MR-4).